A 65-amino-acid chain; its full sequence is Small ribosomal subunit protein bS21 (65 aa).

Residues 43 to 65 (VDDRLKRARSKRRAQRANEESNA) form a disordered region. Positions 48 to 57 (KRARSKRRAQ) are enriched in basic residues.

It belongs to the bacterial ribosomal protein bS21 family.

This Chloroherpeton thalassium (strain ATCC 35110 / GB-78) protein is Small ribosomal subunit protein bS21.